The chain runs to 306 residues: Glutamyl-Q tRNA(Asp) synthetase (306 aa).

L-glutamate-binding positions include 29–33 (RFAPS) and Asp65. Residues 32-42 (PSPTGPLHLGN) carry the 'HIGH' region motif. Positions 121, 123, 141, and 145 each coordinate Zn(2+). Positions 188 and 206 each coordinate L-glutamate. Positions 244 to 248 (KLAKR) match the 'KMSKS' region motif. Lys247 contacts ATP.

The protein belongs to the class-I aminoacyl-tRNA synthetase family. GluQ subfamily. Zn(2+) serves as cofactor.

Its function is as follows. Catalyzes the tRNA-independent activation of glutamate in presence of ATP and the subsequent transfer of glutamate onto a tRNA(Asp). Glutamate is transferred on the 2-amino-5-(4,5-dihydroxy-2-cyclopenten-1-yl) moiety of the queuosine in the wobble position of the QUC anticodon. The polypeptide is Glutamyl-Q tRNA(Asp) synthetase (Prochlorococcus marinus (strain MIT 9313)).